The following is a 191-amino-acid chain: MSNINVIDILKESDALLEGHFLLSSGRHSNRYCQCAKLLQCPQKAEKVISVIAEKLKEVDFNIIVGPAMGGVIVSYELARQTNKPGIFAERKEGVMCIRRGFEIKKGDKVIISEDVVTTGKSSLEVAKVIEEMGGEVVGIACIVDRRAEDVKTNYPIYSACKLEIETYEKDNCELCKKNIPFVKPGSREQK.

5-phospho-alpha-D-ribose 1-diphosphate is bound at residue 114–122 (EDVVTTGKS). The orotate site is built by threonine 118 and arginine 146.

It belongs to the purine/pyrimidine phosphoribosyltransferase family. PyrE subfamily. As to quaternary structure, homodimer. Mg(2+) is required as a cofactor.

It carries out the reaction orotidine 5'-phosphate + diphosphate = orotate + 5-phospho-alpha-D-ribose 1-diphosphate. Its pathway is pyrimidine metabolism; UMP biosynthesis via de novo pathway; UMP from orotate: step 1/2. In terms of biological role, catalyzes the transfer of a ribosyl phosphate group from 5-phosphoribose 1-diphosphate to orotate, leading to the formation of orotidine monophosphate (OMP). In Clostridium botulinum (strain Loch Maree / Type A3), this protein is Orotate phosphoribosyltransferase.